The following is a 130-amino-acid chain: Anti-adapter protein IraD (130 aa).

It belongs to the GpW/Gp25 family. IraD subfamily. As to quaternary structure, interacts with RssB.

It is found in the cytoplasm. Inhibits RpoS proteolysis by regulating RssB activity, thereby increasing the stability of the sigma stress factor RpoS during oxidative stress. Its effect on RpoS stability is due to its interaction with RssB, which probably blocks the interaction of RssB with RpoS, and the consequent delivery of the RssB-RpoS complex to the ClpXP protein degradation pathway. This is Anti-adapter protein IraD from Escherichia coli O157:H7.